Reading from the N-terminus, the 117-residue chain is Ribonuclease P protein component 4 (117 aa).

Zn(2+) contacts are provided by Cys-64, Cys-67, Cys-93, and Cys-96.

This sequence belongs to the eukaryotic/archaeal RNase P protein component 4 family. As to quaternary structure, consists of a catalytic RNA component and at least 4-5 protein subunits. It depends on Zn(2+) as a cofactor.

The protein resides in the cytoplasm. It carries out the reaction Endonucleolytic cleavage of RNA, removing 5'-extranucleotides from tRNA precursor.. Part of ribonuclease P, a protein complex that generates mature tRNA molecules by cleaving their 5'-ends. The sequence is that of Ribonuclease P protein component 4 from Pyrococcus abyssi (strain GE5 / Orsay).